Here is a 300-residue protein sequence, read N- to C-terminus: GTPase Era (300 aa).

The 169-residue stretch at 7-175 folds into the Era-type G domain; the sequence is YCGFIAIVGR…EKFVRESLKE (169 aa). The interval 15–22 is G1; that stretch reads GRPNVGKS. 15–22 contributes to the GTP binding site; sequence GRPNVGKS. Positions 41–45 are G2; it reads QTTRH. The tract at residues 62 to 65 is G3; it reads DTPG. GTP is bound by residues 62–66 and 124–127; these read DTPGL and NKVD. The G4 stretch occupies residues 124–127; it reads NKVD. The G5 stretch occupies residues 154-156; sequence ISA. The region spanning 206–283 is the KH type-2 domain; sequence MGEELPYSVT…HLELWVKVKA (78 aa).

This sequence belongs to the TRAFAC class TrmE-Era-EngA-EngB-Septin-like GTPase superfamily. Era GTPase family. In terms of assembly, monomer.

It localises to the cytoplasm. The protein localises to the cell inner membrane. In terms of biological role, an essential GTPase that binds both GDP and GTP, with rapid nucleotide exchange. Plays a role in 16S rRNA processing and 30S ribosomal subunit biogenesis and possibly also in cell cycle regulation and energy metabolism. The protein is GTPase Era of Glaesserella parasuis serovar 5 (strain SH0165) (Haemophilus parasuis).